We begin with the raw amino-acid sequence, 211 residues long: MRHYTGIDQLINSFDQALRSLVPGATAAQRQNPAETVEAKLGVEDARHVAGLMRVNHSGEVCAQALYHGQALTAKLPNVRREMQQAAIEEQDHLAWCEDRLKELNSHTSLLNPIWYGLSYGMGALAGIAGDKYSLGFVAETERQVSLHLQDHLNQLPAQDERSRKILEQMNEDELHHRHTALEAGGVELPYAVKITMTAISKLMTKTSYYL.

The Fe cation site is built by Glu60, Glu90, His93, Glu142, Glu174, and His177.

This sequence belongs to the COQ7 family. Fe cation is required as a cofactor.

The protein localises to the cell membrane. The catalysed reaction is a 5-methoxy-2-methyl-3-(all-trans-polyprenyl)benzene-1,4-diol + AH2 + O2 = a 3-demethylubiquinol + A + H2O. Its pathway is cofactor biosynthesis; ubiquinone biosynthesis. In terms of biological role, catalyzes the hydroxylation of 2-nonaprenyl-3-methyl-6-methoxy-1,4-benzoquinol during ubiquinone biosynthesis. This Acinetobacter baumannii (strain AB307-0294) protein is 3-demethoxyubiquinol 3-hydroxylase.